Consider the following 214-residue polypeptide: Adenylate kinase (214 aa).

Position 10–15 (10–15) interacts with ATP; that stretch reads GAGKGT. The segment at 30-59 is NMP; sequence STGDMLRAAIKAGSELGQKAKILMDMGQLV. AMP-binding positions include T31, R36, 57–59, 85–88, and Q92; these read QLV and GFPR. An LID region spans residues 122–159; the sequence is GRRVHPASGRTYHIVYNPPKVEDKDDITGEDLILRADD. ATP-binding positions include R123 and 132–133; that span reads TY. Residues R156 and R167 each coordinate AMP. Q200 serves as a coordination point for ATP.

The protein belongs to the adenylate kinase family. Monomer.

It is found in the cytoplasm. The enzyme catalyses AMP + ATP = 2 ADP. It functions in the pathway purine metabolism; AMP biosynthesis via salvage pathway; AMP from ADP: step 1/1. In terms of biological role, catalyzes the reversible transfer of the terminal phosphate group between ATP and AMP. Plays an important role in cellular energy homeostasis and in adenine nucleotide metabolism. The sequence is that of Adenylate kinase from Histophilus somni (strain 129Pt) (Haemophilus somnus).